A 272-amino-acid polypeptide reads, in one-letter code: Dermonecrotic toxin LvSicTox-alphaIC1bi (272 aa).

Histidine 5 is a catalytic residue. Mg(2+) contacts are provided by glutamate 25 and aspartate 27. Residue histidine 41 is the Nucleophile of the active site. 2 disulfide bridges follow: cysteine 45–cysteine 51 and cysteine 47–cysteine 189. Aspartate 84 contributes to the Mg(2+) binding site.

This sequence belongs to the arthropod phospholipase D family. Class II subfamily. Requires Mg(2+) as cofactor. In terms of tissue distribution, expressed by the venom gland.

It localises to the secreted. The catalysed reaction is an N-(acyl)-sphingosylphosphocholine = an N-(acyl)-sphingosyl-1,3-cyclic phosphate + choline. It carries out the reaction an N-(acyl)-sphingosylphosphoethanolamine = an N-(acyl)-sphingosyl-1,3-cyclic phosphate + ethanolamine. The enzyme catalyses a 1-acyl-sn-glycero-3-phosphocholine = a 1-acyl-sn-glycero-2,3-cyclic phosphate + choline. It catalyses the reaction a 1-acyl-sn-glycero-3-phosphoethanolamine = a 1-acyl-sn-glycero-2,3-cyclic phosphate + ethanolamine. In terms of biological role, dermonecrotic toxins cleave the phosphodiester linkage between the phosphate and headgroup of certain phospholipids (sphingolipid and lysolipid substrates), forming an alcohol (often choline) and a cyclic phosphate. This toxin acts on sphingomyelin (SM). It may also act on ceramide phosphoethanolamine (CPE), lysophosphatidylcholine (LPC) and lysophosphatidylethanolamine (LPE), but not on lysophosphatidylserine (LPS), and lysophosphatidylglycerol (LPG). It acts by transphosphatidylation, releasing exclusively cyclic phosphate products as second products. Induces dermonecrosis, hemolysis, increased vascular permeability, edema, inflammatory response, and platelet aggregation. The chain is Dermonecrotic toxin LvSicTox-alphaIC1bi from Loxosceles variegata (Recluse spider).